A 285-amino-acid polypeptide reads, in one-letter code: Bifunctional protein FolD (285 aa).

NADP(+) contacts are provided by residues Gly-164–Ser-166, Ile-189, and Ile-230.

It belongs to the tetrahydrofolate dehydrogenase/cyclohydrolase family. Homodimer.

The catalysed reaction is (6R)-5,10-methylene-5,6,7,8-tetrahydrofolate + NADP(+) = (6R)-5,10-methenyltetrahydrofolate + NADPH. It catalyses the reaction (6R)-5,10-methenyltetrahydrofolate + H2O = (6R)-10-formyltetrahydrofolate + H(+). It functions in the pathway one-carbon metabolism; tetrahydrofolate interconversion. In terms of biological role, catalyzes the oxidation of 5,10-methylenetetrahydrofolate to 5,10-methenyltetrahydrofolate and then the hydrolysis of 5,10-methenyltetrahydrofolate to 10-formyltetrahydrofolate. This Sulfurimonas denitrificans (strain ATCC 33889 / DSM 1251) (Thiomicrospira denitrificans (strain ATCC 33889 / DSM 1251)) protein is Bifunctional protein FolD.